The primary structure comprises 93 residues: Cell division protein CrgA (93 aa).

Helical transmembrane passes span 31-51 and 70-90; these read VWFV…LMVF and LGPW…LLTM.

The protein belongs to the CrgA family.

It localises to the cell membrane. Involved in cell division. This Mycobacterium bovis (strain ATCC BAA-935 / AF2122/97) protein is Cell division protein CrgA.